We begin with the raw amino-acid sequence, 431 residues long: Chaperone SurA (431 aa).

The signal sequence occupies residues 1-22; it reads MKLWKPTLISVLSALTLFNAHA. PpiC domains lie at 173–271 and 280–380; these read TVQY…KIDD and VTEV…EVLD.

Its subcellular location is the periplasm. The enzyme catalyses [protein]-peptidylproline (omega=180) = [protein]-peptidylproline (omega=0). In terms of biological role, chaperone involved in the correct folding and assembly of outer membrane proteins. Recognizes specific patterns of aromatic residues and the orientation of their side chains, which are found more frequently in integral outer membrane proteins. May act in both early periplasmic and late outer membrane-associated steps of protein maturation. The protein is Chaperone SurA of Vibrio cholerae serotype O1 (strain ATCC 39315 / El Tor Inaba N16961).